Consider the following 937-residue polypeptide: Diacylglycerol kinase theta (937 aa).

The segment at 1 to 48 (MATAAESGARTWPGSGSPRLGSPAGSPVLGISGRARPGSGPERTGRAI) is disordered. 2 positions are modified to phosphoserine: Ser22 and Ser26. 3 Phorbol-ester/DAG-type zinc fingers span residues 54–102 (GHSF…KTPC), 115–162 (AHCF…CSDC), and 177–228 (HHHW…TPEC). Residues 359 to 378 (GKAGTTEEETSKDSGPGDSV) form a disordered region. The Ras-associating domain occupies 390–489 (TQEILKIYPD…TRFYVAEARA (100 aa)). 2 short sequence motifs (LXXLL motif) span residues 550-554 (LYMLA) and 569-573 (LPDVL). The region spanning 579–716 (PDCCPLLVFV…MDRWTILLDA (138 aa)) is the DAGKc domain. A disordered region spans residues 911–937 (AKQKPRKAGAIRDTRVDTLPAPEGNPL).

This sequence belongs to the eukaryotic diacylglycerol kinase family. Interacts with RHOA (constitutively activated, GTP-bound); the interaction inhibits DGKQ. Interacts with PRKCE. Interacts with PRKCH. Interacts with PLCB1. Interacts with NR5A1; the interaction requires both LXXLL motifs in DGKQ and is required for full phosphatidic acid-mediated activation of NR5A1. In terms of processing, phosphorylated by PRKCE and PRKCH in vitro. Widely expressed with higher expression in the brain and, to a lesser extent, in the small intestine, duodenum, and liver. In brain, expressed in gray matter. Expression is most intense in the cerebellar cortex and hippocampus, while moderate expression is seen in the olfactory bulb neuronal layers and brain stem nuclei. In the cerebellar cortex, equally expressed in both the Purkinje cell somata and the granule cells.

It localises to the cytoplasm. Its subcellular location is the cytosol. The protein localises to the cell membrane. It is found in the synapse. The protein resides in the cytoskeleton. It localises to the nucleus. Its subcellular location is the nucleus speckle. The protein localises to the nucleus matrix. The catalysed reaction is a 1,2-diacyl-sn-glycerol + ATP = a 1,2-diacyl-sn-glycero-3-phosphate + ADP + H(+). It catalyses the reaction a 1-O-alkyl-sn-glycerol + ATP = a 1-O-alkyl-sn-glycero-3-phosphate + ADP + H(+). It carries out the reaction 1-O-alkyl-2-acyl-sn-glycerol + ATP = 1-O-alkyl-2-acyl-sn-glycero-3-phosphate + ADP + H(+). The enzyme catalyses 1,2-di-(9Z-octadecenoyl)-sn-glycerol + ATP = 1,2-di-(9Z-octadecenoyl)-sn-glycero-3-phosphate + ADP + H(+). The catalysed reaction is 1-O-hexadecyl-sn-glycerol + ATP = 1-O-hexadecyl-sn-glycero-3-phosphate + ADP + H(+). It catalyses the reaction 1-O-hexadecyl-2-acetyl-sn-glycerol + ATP = 1-O-hexadecyl-2-acetyl-sn-glycero-3-phosphate + ADP + H(+). It carries out the reaction 1-octadecanoyl-2-(5Z,8Z,11Z,14Z-eicosatetraenoyl)-sn-glycerol + ATP = 1-octadecanoyl-2-(5Z,8Z,11Z,14Z-eicosatetraenoyl)-sn-glycero-3-phosphate + ADP + H(+). The protein operates within lipid metabolism; glycerolipid metabolism. With respect to regulation, activated by phosphatidylserine. Diacylglycerol kinase that converts diacylglycerol/DAG into phosphatidic acid/phosphatidate/PA and regulates the respective levels of these two bioactive lipids. Thereby, acts as a central switch between the signaling pathways activated by these second messengers with different cellular targets and opposite effects in numerous biological processes. Within the adrenocorticotropic hormone signaling pathway, produces phosphatidic acid which in turn activates NR5A1 and subsequent steroidogenic gene transcription. Also functions downstream of the nerve growth factor signaling pathway being specifically activated in the nucleus by the growth factor. Through its diacylglycerol activity also regulates synaptic vesicle endocytosis. This chain is Diacylglycerol kinase theta, found in Rattus norvegicus (Rat).